Consider the following 205-residue polypeptide: MRQKLDRLLEQAQINLTDQQKEQLVGFVRLLDKWNKAYNLTSVRNPDEMLVKHILDSLVVSEHLQGNNFIDVGTGPGLPGIPLAIANPDKQFVLLDSLGKRITFIKNALRELGITNVTPVLSRVEEYKEQTFDGVLSRAFASLNDMVDWCYHLPNPQGKFYALKGIYAESEVQEIKNPIWLEKVIPLSVPELVGERHLVLLNKPN.

S-adenosyl-L-methionine-binding positions include G73, L78, 124-125 (VE), and R138.

The protein belongs to the methyltransferase superfamily. RNA methyltransferase RsmG family.

The protein resides in the cytoplasm. It catalyses the reaction guanosine(527) in 16S rRNA + S-adenosyl-L-methionine = N(7)-methylguanosine(527) in 16S rRNA + S-adenosyl-L-homocysteine. In terms of biological role, specifically methylates the N7 position of guanine in position 527 of 16S rRNA. This Actinobacillus pleuropneumoniae serotype 7 (strain AP76) protein is Ribosomal RNA small subunit methyltransferase G.